The following is a 223-amino-acid chain: Putative HTLV-1-related endogenous sequence (223 aa).

The segment covering 1-19 (MRCAHAPAPRTRYPTRAPS) has biased composition (low complexity). The disordered stretch occupies residues 1–184 (MRCAHAPAPR…ARAHGEAGAG (184 aa)). The segment covering 115–126 (GDRRREGPDRSP) has biased composition (basic and acidic residues). The span at 133 to 157 (PAAAAQPDSSSAQAPGPSTLRPAAT) shows a compositional bias: low complexity.

The sequence is that of Putative HTLV-1-related endogenous sequence (HRES1) from Homo sapiens (Human).